Consider the following 63-residue polypeptide: Large ribosomal subunit protein uL30 (63 aa).

This sequence belongs to the universal ribosomal protein uL30 family. In terms of assembly, part of the 50S ribosomal subunit.

The protein is Large ribosomal subunit protein uL30 of Hahella chejuensis (strain KCTC 2396).